The sequence spans 269 residues: Ribosomal RNA small subunit methyltransferase A (269 aa).

Residues H11, L13, G38, E59, D84, and N105 each coordinate S-adenosyl-L-methionine.

This sequence belongs to the class I-like SAM-binding methyltransferase superfamily. rRNA adenine N(6)-methyltransferase family. RsmA subfamily.

Its subcellular location is the cytoplasm. It catalyses the reaction adenosine(1518)/adenosine(1519) in 16S rRNA + 4 S-adenosyl-L-methionine = N(6)-dimethyladenosine(1518)/N(6)-dimethyladenosine(1519) in 16S rRNA + 4 S-adenosyl-L-homocysteine + 4 H(+). Its function is as follows. Specifically dimethylates two adjacent adenosines (A1518 and A1519) in the loop of a conserved hairpin near the 3'-end of 16S rRNA in the 30S particle. May play a critical role in biogenesis of 30S subunits. This Acaryochloris marina (strain MBIC 11017) protein is Ribosomal RNA small subunit methyltransferase A.